The following is a 341-amino-acid chain: UDP-3-O-acylglucosamine N-acyltransferase (341 aa).

Catalysis depends on His241, which acts as the Proton acceptor.

Belongs to the transferase hexapeptide repeat family. LpxD subfamily. As to quaternary structure, homotrimer.

The enzyme catalyses a UDP-3-O-[(3R)-3-hydroxyacyl]-alpha-D-glucosamine + a (3R)-hydroxyacyl-[ACP] = a UDP-2-N,3-O-bis[(3R)-3-hydroxyacyl]-alpha-D-glucosamine + holo-[ACP] + H(+). It participates in bacterial outer membrane biogenesis; LPS lipid A biosynthesis. In terms of biological role, catalyzes the N-acylation of UDP-3-O-acylglucosamine using 3-hydroxyacyl-ACP as the acyl donor. Is involved in the biosynthesis of lipid A, a phosphorylated glycolipid that anchors the lipopolysaccharide to the outer membrane of the cell. The protein is UDP-3-O-acylglucosamine N-acyltransferase of Histophilus somni (strain 129Pt) (Haemophilus somnus).